The chain runs to 151 residues: UPF0178 protein Shal_3046 (151 aa).

Belongs to the UPF0178 family.

The sequence is that of UPF0178 protein Shal_3046 from Shewanella halifaxensis (strain HAW-EB4).